The sequence spans 94 residues: MSRICELTGKGRQVGHNVSHANNKTKRLFLPNLQNVTLLSEKLDRSFKFRVSTHGLRSVEHNGGLDNWLLKQSDTKLSARALKVKRELVKASAA.

This sequence belongs to the bacterial ribosomal protein bL28 family.

This chain is Large ribosomal subunit protein bL28, found in Novosphingobium aromaticivorans (strain ATCC 700278 / DSM 12444 / CCUG 56034 / CIP 105152 / NBRC 16084 / F199).